The sequence spans 390 residues: LIM/homeobox protein Lhx4 (390 aa).

LIM zinc-binding domains follow at residues 28–87 (PQCA…RFGT) and 88–150 (KCTA…AKQN). Residues 157-216 (AKRPRTTITAKQLETLKNAYKNSPKPARHVREQLSSETGLDMRVVQVWFQNRRAKEKRLK) constitute a DNA-binding region (homeobox). Residues 161–181 (RTTITAKQLETLKNAYKNSPK) are interaction with DNA. The interval 199 to 211 (RVVQVWFQNRRAK) is interaction with 5-mCpG DNA. Disordered stretches follow at residues 230 to 253 (SVKRSRGSSKQEKESSAEDCGVSD) and 356 to 390 (AGGPTSDISTGSSVGYPDFPTSPGSWLDEMDHPPF).

It is found in the nucleus. Its function is as follows. May play a critical role in the development of respiratory control mechanisms and in the normal growth and maturation of the lung. Binds preferentially to methylated DNA. This Homo sapiens (Human) protein is LIM/homeobox protein Lhx4 (LHX4).